Here is a 280-residue protein sequence, read N- to C-terminus: B3 domain-containing protein At5g25470 (280 aa).

Positions Trp-20–Asp-114 form a DNA-binding region, TF-B3 1. A disordered region spans residues Pro-122–Ala-153. The segment at residues Tyr-183–Phe-276 is a DNA-binding region (TF-B3 2).

It localises to the nucleus. The protein is B3 domain-containing protein At5g25470 of Arabidopsis thaliana (Mouse-ear cress).